The sequence spans 106 residues: MSKAVLKFIRLSPTKARLIAKEIQGMNAEEALAKLEFMPNKAARVIAKVVASAVANGGYDANEVVITSCRIDRGPYLKRFRPRARGMASRIQKPTAHIFVEVEKES.

The protein belongs to the universal ribosomal protein uL22 family. In terms of assembly, part of the 50S ribosomal subunit.

Its function is as follows. This protein binds specifically to 23S rRNA; its binding is stimulated by other ribosomal proteins, e.g. L4, L17, and L20. It is important during the early stages of 50S assembly. It makes multiple contacts with different domains of the 23S rRNA in the assembled 50S subunit and ribosome. In terms of biological role, the globular domain of the protein is located near the polypeptide exit tunnel on the outside of the subunit, while an extended beta-hairpin is found that lines the wall of the exit tunnel in the center of the 70S ribosome. This is Large ribosomal subunit protein uL22 from Nautilia profundicola (strain ATCC BAA-1463 / DSM 18972 / AmH).